A 348-amino-acid polypeptide reads, in one-letter code: MFYLSTFMTIVISLSLVSCSYDCNNPGFTCHGECHYYGSCICNERLTGYDCSVLKSSLSTGSDCKVTCQNNGRCYDGNKCLCSSDYTGHLCEKQTTGARCTLDGVVFEAYRPIGFDGETYLSQSRSCKLLQSESDVPGMIKFERKIFHGDTSMCGLKKHMDMPNAGDITYEADIYSTFVYNSWGTRDFVDNVKCQYKPTRVGLSMDAPDSLFPIKMSARDGASSNVQATTQSAPISLLFSPQNIPDVKGAMVDYMEVYSINSTSKEYKSVVAVKNGCAQKTEYNVAFDNLDELDPVTSTWIGLVKMQAFIIFENEPLLFNYRLRFCPDRCSKPTCAAPAVSQAPSTAV.

The N-terminal stretch at Met-1–Cys-19 is a signal peptide. In terms of domain architecture, EGF-like spans Thr-60–Glu-92. 3 cysteine pairs are disulfide-bonded: Cys-64–Cys-74, Cys-68–Cys-80, and Cys-82–Cys-91. In terms of domain architecture, ZP spans Arg-99–Gln-342.

As to expression, prismatic layer of shell (at protein level). Expressed primarily in the mantle with highest level in the mantle edge and lower level in the mantle pallium.

The protein resides in the secreted. This is EGF-like domain containing protein 1 from Margaritifera margaritifera (Freshwater pearl mussel).